The chain runs to 205 residues: Suppressor of silencing 2b (205 aa).

The disordered stretch occupies residues 23–52 (SEPQPSTTESRPSMPPINSGKPSVTEKPGV).

This sequence belongs to the cucumovirus/ilarvirus protein 2b family.

The protein localises to the host nucleus. Acts as a suppressor of RNA-mediated gene silencing, also known as post-transcriptional gene silencing (PTGS), a mechanism of plant viral defense that limits the accumulation of viral RNAs. May directly interfere with the mobile silencing signal. The polypeptide is Suppressor of silencing 2b (Tobacco streak virus (strain WC) (TSV)).